The following is a 531-amino-acid chain: SWI/SNF-related matrix-associated actin-dependent regulator of chromatin subfamily D member 2 (531 aa).

Arginine 81 and arginine 104 each carry asymmetric dimethylarginine. Position 203 is a phosphoserine (serine 203). The segment at 205 to 226 (SKAEGDSAGTAGTPGGTPAGDK) is disordered. Threonine 217 bears the Phosphothreonine mark. A Glycyl lysine isopeptide (Lys-Gly) (interchain with G-Cter in SUMO2) cross-link involves residue lysine 226. The 78-residue stretch at 306–383 (HQPPQYKLDP…PMKLAGLLQH (78 aa)) folds into the SWIB/MDM2 domain.

Belongs to the SMARCD family. In terms of assembly, component of the multiprotein chromatin-remodeling complexes SWI/SNF: SWI/SNF-A (BAF), SWI/SNF-B (PBAF) and related complexes. The canonical complex contains a catalytic subunit (either SMARCA4/BRG1/BAF190A or SMARCA2/BRM/BAF190B), and at least SMARCE1, ACTL6A/BAF53, SMARCC1/BAF155, SMARCC2/BAF170, and SMARCB1/SNF5/BAF47. Other subunits specific to each of the complexes may also be present permitting several possible combinations developmentally and tissue specific. Component of the BAF complex, which includes at least actin (ACTB), ARID1A/BAF250A, ARID1B/BAF250B, SMARCA2/BRM, SMARCA4/BRG1, ACTL6A/BAF53, ACTL6B/BAF53B, SMARCE1/BAF57, SMARCC1/BAF155, SMARCC2/BAF170, SMARCB1/SNF5/INI1, and one or more SMARCD1/BAF60A, SMARCD2/BAF60B, or SMARCD3/BAF60C. In muscle cells, the BAF complex also contains DPF3. Component of the SWI/SNF-B (PBAF) chromatin remodeling complex, at least composed of SMARCA4/BRG1, SMARCB1/BAF47/SNF5, ACTL6A/BAF53A or ACTL6B/BAF53B, SMARCE1/BAF57, SMARCD1/BAF60A, SMARCD2/BAF60B, perhaps SMARCD3/BAF60C, SMARCC1/BAF155, SMARCC2/BAF170, PBRM1/BAF180, ARID2/BAF200 and actin (ACTB). Interacts with UNKL. Interacts with CEBPE. Post-translationally, ubiquitinated through a signaling process involving RAC1 and the RING finger protein UNKL. Isoform 2 is expressed in the pancreas.

The protein localises to the nucleus. Its function is as follows. Involved in transcriptional activation and repression of select genes by chromatin remodeling (alteration of DNA-nucleosome topology). Component of SWI/SNF chromatin remodeling complexes that carry out key enzymatic activities, changing chromatin structure by altering DNA-histone contacts within a nucleosome in an ATP-dependent manner. Critical regulator of myeloid differentiation, controlling granulocytopoiesis and the expression of genes involved in neutrophil granule formation. In Homo sapiens (Human), this protein is SWI/SNF-related matrix-associated actin-dependent regulator of chromatin subfamily D member 2 (SMARCD2).